The primary structure comprises 242 residues: tRNA pseudouridine synthase A (242 aa).

Catalysis depends on D51, which acts as the Nucleophile. Residue Y107 coordinates substrate.

It belongs to the tRNA pseudouridine synthase TruA family. Homodimer.

The enzyme catalyses uridine(38/39/40) in tRNA = pseudouridine(38/39/40) in tRNA. In terms of biological role, formation of pseudouridine at positions 38, 39 and 40 in the anticodon stem and loop of transfer RNAs. This is tRNA pseudouridine synthase A from Helicobacter pylori (strain G27).